A 201-amino-acid chain; its full sequence is Probable molybdenum cofactor guanylyltransferase (201 aa).

GTP-binding positions include 6–8 (LAG), Lys18, Asp67, and Asp92. Asp92 provides a ligand contact to Mg(2+).

The protein belongs to the MobA family. Mg(2+) serves as cofactor.

The protein resides in the cytoplasm. It carries out the reaction Mo-molybdopterin + GTP + H(+) = Mo-molybdopterin guanine dinucleotide + diphosphate. Functionally, transfers a GMP moiety from GTP to Mo-molybdopterin (Mo-MPT) cofactor (Moco or molybdenum cofactor) to form Mo-molybdopterin guanine dinucleotide (Mo-MGD) cofactor. This Thermococcus kodakarensis (strain ATCC BAA-918 / JCM 12380 / KOD1) (Pyrococcus kodakaraensis (strain KOD1)) protein is Probable molybdenum cofactor guanylyltransferase.